Reading from the N-terminus, the 212-residue chain is GTP-binding protein EngB (212 aa).

In terms of domain architecture, EngB-type G spans T36–I212. GTP-binding positions include G44–S51, G71–E75, D91–G94, T158–D161, and T192–S194. Positions 51 and 73 each coordinate Mg(2+).

This sequence belongs to the TRAFAC class TrmE-Era-EngA-EngB-Septin-like GTPase superfamily. EngB GTPase family. Mg(2+) serves as cofactor.

Functionally, necessary for normal cell division and for the maintenance of normal septation. The protein is GTP-binding protein EngB of Zymomonas mobilis subsp. mobilis (strain ATCC 31821 / ZM4 / CP4).